A 673-amino-acid polypeptide reads, in one-letter code: UvrABC system protein B (673 aa).

The Helicase ATP-binding domain occupies 26–183 (EGLEDGLAHQ…RRLAELQYTR (158 aa)). 39 to 46 (GVTGSGKT) is an ATP binding site. The Beta-hairpin motif lies at 92–115 (YYDYYQPEAYVPSSDTFIEKDASV). One can recognise a Helicase C-terminal domain in the interval 431–597 (QVDDLLSEIR…GLNKKVVDIL (167 aa)). The UVR domain occupies 633-668 (QQKIHELEGQMMQHAQNLEFEEAAQIRDQLHQLREL).

Belongs to the UvrB family. Forms a heterotetramer with UvrA during the search for lesions. Interacts with UvrC in an incision complex.

Its subcellular location is the cytoplasm. Its function is as follows. The UvrABC repair system catalyzes the recognition and processing of DNA lesions. A damage recognition complex composed of 2 UvrA and 2 UvrB subunits scans DNA for abnormalities. Upon binding of the UvrA(2)B(2) complex to a putative damaged site, the DNA wraps around one UvrB monomer. DNA wrap is dependent on ATP binding by UvrB and probably causes local melting of the DNA helix, facilitating insertion of UvrB beta-hairpin between the DNA strands. Then UvrB probes one DNA strand for the presence of a lesion. If a lesion is found the UvrA subunits dissociate and the UvrB-DNA preincision complex is formed. This complex is subsequently bound by UvrC and the second UvrB is released. If no lesion is found, the DNA wraps around the other UvrB subunit that will check the other stand for damage. The polypeptide is UvrABC system protein B (Salmonella heidelberg (strain SL476)).